Consider the following 400-residue polypeptide: Mannitol-1-phosphate 5-dehydrogenase (400 aa).

12–23 is an NAD(+) binding site; it reads AVHFGAGNIGRG. The active site involves Lys-221.

The protein belongs to the mannitol dehydrogenase family. In terms of assembly, monomer.

It catalyses the reaction D-mannitol 1-phosphate + NAD(+) = beta-D-fructose 6-phosphate + NADH + H(+). In terms of biological role, catalyzes the NAD(H)-dependent interconversion of D-fructose 6-phosphate and D-mannitol 1-phosphate in the mannitol metabolic pathway. The sequence is that of Mannitol-1-phosphate 5-dehydrogenase from Pyricularia oryzae (strain Y34) (Rice blast fungus).